The following is a 264-amino-acid chain: uncharacterized protein (264 aa).

Disordered regions lie at residues 1–52 and 123–207; these read MPRS…AVPG and GGRW…PWTR. A compositionally biased stretch (low complexity) spans 29–40; sequence AAHPTTSPTAAS. The span at 144-154 shows a compositional bias: polar residues; that stretch reads HFQSSGAQQES. Residues 188 to 197 show a composition bias toward basic residues; that stretch reads ARKSACKCPR.

This is an uncharacterized protein from Homo sapiens (Human).